A 371-amino-acid chain; its full sequence is 4-hydroxyphenylpyruvate dioxygenase-like protein (371 aa).

2 VOC domains span residues 7 to 135 and 160 to 328; these read RLCH…LLER and RVDH…VFTK. Histidine 163, histidine 258, and glutamate 339 together coordinate Fe cation.

It belongs to the 4HPPD family. It depends on Fe cation as a cofactor.

It is found in the mitochondrion. The enzyme catalyses 3-(4-hydroxyphenyl)pyruvate + O2 = (S)-4-hydroxymandelate + CO2. Iron-dependent dioxygenase that catalyzes the conversion of 4-hydroxyphenylpyruvate (4-HPPA) to 4-hydroxymandelate (4-HMA) in the mitochondria, one of the steps in the biosynthesis of coenzyme Q10 from tyrosine. This is 4-hydroxyphenylpyruvate dioxygenase-like protein from Homo sapiens (Human).